The primary structure comprises 197 residues: uncharacterized protein (197 aa).

This is an uncharacterized protein from Methanothermobacter thermautotrophicus (Methanobacterium thermoformicicum).